A 103-amino-acid chain; its full sequence is Thioredoxin (103 aa).

Residues 1–103 enclose the Thioredoxin domain; sequence MVKEITDATF…ELDEVINKYV (103 aa). Cysteine 28 and cysteine 31 form a disulfide bridge.

It belongs to the thioredoxin family.

Component of the thioredoxin-thioredoxin reductase system. Participates in various redox reactions through the reversible oxidation of its active center dithiol to a disulfide and catalyzes dithiol-disulfide exchange reactions. This Listeria innocua serovar 6a (strain ATCC BAA-680 / CLIP 11262) protein is Thioredoxin (trxA).